Reading from the N-terminus, the 219-residue chain is Small ribosomal subunit protein uS3c (219 aa).

The 72-residue stretch at 47 to 118 (IKKNIRISSG…KINIAITRIT (72 aa)) folds into the KH type-2 domain.

The protein belongs to the universal ribosomal protein uS3 family. As to quaternary structure, part of the 30S ribosomal subunit.

Its subcellular location is the plastid. It is found in the chloroplast. In Citrus sinensis (Sweet orange), this protein is Small ribosomal subunit protein uS3c (rps3).